Consider the following 110-residue polypeptide: UPF0060 membrane protein Bpet0062 (110 aa).

The next 4 helical transmembrane spans lie at 7-27, 33-53, 63-83, and 86-106; these read LGLFALTAVAEIVGCYLPYLW, SAWLLVPAALSLAVFAWLLTL, AAYGGVYVSMALLWLWAVDGV, and ATTDWAGVGLCLAGMALIMAG.

The protein belongs to the UPF0060 family.

The protein localises to the cell inner membrane. This Bordetella petrii (strain ATCC BAA-461 / DSM 12804 / CCUG 43448) protein is UPF0060 membrane protein Bpet0062.